The following is a 711-amino-acid chain: Ecdysone-inducible protein E75 (711 aa).

Positions 44 to 120 (TVLCRVCGDK…VGMSRDAVRF (77 aa)) form a DNA-binding region, nuclear receptor. NR C4-type zinc fingers lie at residues 47–67 (CRVC…CEGC) and 84–108 (CTKN…LKKC). An NR LBD domain is found at 153–400 (DGPRLLARVV…QQMWVEDEGA (248 aa)). 4 disordered regions span residues 405–432 (SGAD…DCGT), 466–530 (LTVT…DMPV), 559–602 (AMRR…PIRA), and 680–711 (DAPQ…MLPA). Composition is skewed to basic and acidic residues over residues 511–521 (SLEEHSDDRRP) and 560–572 (MRRD…EARP). A compositionally biased stretch (pro residues) spans 574–590 (RPTPSPQPPHHPHPASP). Low complexity-rich tracts occupy residues 591 to 602 (AHPAHSPRPIRA) and 682 to 692 (PQPLNLSKKSP). The segment covering 693–711 (SPSPPPPPPRSYMPPMLPA) has biased composition (pro residues).

It belongs to the nuclear hormone receptor family. NR1 subfamily.

It localises to the nucleus. Functionally, orphan receptor possibly involved in the regulation of genes in the ecdysteroid cascade. In Galleria mellonella (Greater wax moth), this protein is Ecdysone-inducible protein E75 (E75).